A 258-amino-acid chain; its full sequence is 5'-nucleotidase SurE (258 aa).

D10, D11, S41, and N96 together coordinate a divalent metal cation.

This sequence belongs to the SurE nucleotidase family. It depends on a divalent metal cation as a cofactor.

It is found in the cytoplasm. It catalyses the reaction a ribonucleoside 5'-phosphate + H2O = a ribonucleoside + phosphate. Its function is as follows. Nucleotidase that shows phosphatase activity on nucleoside 5'-monophosphates. The sequence is that of 5'-nucleotidase SurE from Sorangium cellulosum (strain So ce56) (Polyangium cellulosum (strain So ce56)).